An 833-amino-acid polypeptide reads, in one-letter code: Leucine--tRNA ligase (833 aa).

The 'HIGH' region signature appears at 41 to 52 (PYPSGVGLHVGH). A 'KMSKS' region motif is present at residues 610-614 (KMSKS). Lys613 serves as a coordination point for ATP.

It belongs to the class-I aminoacyl-tRNA synthetase family.

The protein resides in the cytoplasm. The catalysed reaction is tRNA(Leu) + L-leucine + ATP = L-leucyl-tRNA(Leu) + AMP + diphosphate. The polypeptide is Leucine--tRNA ligase (Streptococcus pneumoniae serotype 2 (strain D39 / NCTC 7466)).